The primary structure comprises 253 residues: Demethylmenaquinone methyltransferase (253 aa).

Residues Thr-62, Asp-80, Asp-102–Ala-103, and Ser-119 contribute to the S-adenosyl-L-methionine site.

This sequence belongs to the class I-like SAM-binding methyltransferase superfamily. MenG/UbiE family.

It carries out the reaction a 2-demethylmenaquinol + S-adenosyl-L-methionine = a menaquinol + S-adenosyl-L-homocysteine + H(+). The protein operates within quinol/quinone metabolism; menaquinone biosynthesis; menaquinol from 1,4-dihydroxy-2-naphthoate: step 2/2. In terms of biological role, methyltransferase required for the conversion of demethylmenaquinol (DMKH2) to menaquinol (MKH2). This chain is Demethylmenaquinone methyltransferase, found in Paenarthrobacter aurescens (strain TC1).